Consider the following 556-residue polypeptide: Arginine--tRNA ligase (556 aa).

The short motif at 132–142 (ANPTGDLHLGH) is the 'HIGH' region element.

Belongs to the class-I aminoacyl-tRNA synthetase family. Monomer.

It is found in the cytoplasm. The catalysed reaction is tRNA(Arg) + L-arginine + ATP = L-arginyl-tRNA(Arg) + AMP + diphosphate. The polypeptide is Arginine--tRNA ligase (argS) (Bacillus subtilis (strain 168)).